Consider the following 572-residue polypeptide: Probable serine/threonine-protein kinase At1g54610 (572 aa).

The segment at 1 to 89 (MGCVFGREAA…SNPSKHWRGE (89 aa)) is disordered. Low complexity predominate over residues 9-40 (AATTTTAEAKQAKSSKASSGVVVVGESSVTKS). Residues 47-67 (DVEKKKNEEANGDKERKSSKG) are compositionally biased toward basic and acidic residues. Positions 74 to 83 (KPNPRLSNPS) are enriched in polar residues. Positions 118 to 402 (FEKIDKIGQG…ASAALKSEFF (285 aa)) constitute a Protein kinase domain. ATP contacts are provided by residues 124-132 (IGQGTYSNV) and Lys147. Asp242 acts as the Proton acceptor in catalysis. Disordered stretches follow at residues 409–474 (CEPA…NVDR) and 526–572 (SSFN…AVVA). A compositionally biased stretch (basic and acidic residues) spans 419–434 (PSKEIDAKRRDEETRR). Basic residues predominate over residues 554–572 (SRKKKDNTKSSKGKRAVVA).

Belongs to the protein kinase superfamily. Ser/Thr protein kinase family.

The catalysed reaction is L-seryl-[protein] + ATP = O-phospho-L-seryl-[protein] + ADP + H(+). The enzyme catalyses L-threonyl-[protein] + ATP = O-phospho-L-threonyl-[protein] + ADP + H(+). This Arabidopsis thaliana (Mouse-ear cress) protein is Probable serine/threonine-protein kinase At1g54610.